The chain runs to 190 residues: 3-isopropylmalate dehydratase small subunit (190 aa).

Belongs to the LeuD family. LeuD type 1 subfamily. Heterodimer of LeuC and LeuD.

It carries out the reaction (2R,3S)-3-isopropylmalate = (2S)-2-isopropylmalate. The protein operates within amino-acid biosynthesis; L-leucine biosynthesis; L-leucine from 3-methyl-2-oxobutanoate: step 2/4. Its function is as follows. Catalyzes the isomerization between 2-isopropylmalate and 3-isopropylmalate, via the formation of 2-isopropylmaleate. This is 3-isopropylmalate dehydratase small subunit from Staphylococcus aureus (strain JH1).